Consider the following 115-residue polypeptide: U17-barytoxin-Tl1b (115 aa).

The first 20 residues, 1-20 (MKTIIVFLSLLVLATKFGDA), serve as a signal peptide directing secretion. Positions 21–74 (KEGVNQKQKKEVTQNEFREEYLNEMAAMSLVQQLEAIERALFENEAGRNSRQKR) are excised as a propeptide. Disulfide bonds link C75–C89, C82–C94, and C88–C109.

Belongs to the neurotoxin 14 (magi-1) family. 03 (ICK-30-40) subfamily. As to expression, expressed by the venom gland.

It localises to the secreted. In terms of biological role, ion channel inhibitor. The protein is U17-barytoxin-Tl1b of Trittame loki (Brush-footed trapdoor spider).